Reading from the N-terminus, the 109-residue chain is Oncomodulin (109 aa).

The residue at position 2 (Ser2) is an N-acetylserine. 2 EF-hand domains span residues 39-74 (MSAS…FQSD) and 78-109 (LTES…MVHS). Residues Asp52, Asp54, Ser56, Tyr58, Glu63, Asp91, Asp93, Asp95, Lys97, and Glu102 each coordinate Ca(2+).

Belongs to the parvalbumin family. Found in tumor tissues and not detected in normal tissues.

Has some calmodulin-like activity with respect to enzyme activation and growth regulation. Binds two calcium ions. This Rattus norvegicus (Rat) protein is Oncomodulin (Ocm).